The chain runs to 238 residues: ATP synthase subunit O, mitochondrial (238 aa).

Residues 1-36 (MANRFRSGISFFKTIAVTDSVSSVRSKSLFPALRTY) constitute a mitochondrion transit peptide. The residue at position 90 (Thr90) is a Phosphothreonine.

The protein belongs to the ATPase delta chain family. In terms of assembly, F-type ATPases have 2 components, CF(1) - the catalytic core - and CF(0) - the membrane proton channel. CF(1) has five subunits: alpha(3), beta(3), gamma(1), delta(1), epsilon(1). CF(0) has three main subunits: a, b and c.

The protein localises to the mitochondrion. The protein resides in the mitochondrion inner membrane. Its function is as follows. Mitochondrial membrane ATP synthase (F(1)F(0) ATP synthase or Complex V) produces ATP from ADP in the presence of a proton gradient across the membrane which is generated by electron transport complexes of the respiratory chain. F-type ATPases consist of two structural domains, F(1) - containing the extramembraneous catalytic core and F(0) - containing the membrane proton channel, linked together by a central stalk and a peripheral stalk. During catalysis, ATP synthesis in the catalytic domain of F(1) is coupled via a rotary mechanism of the central stalk subunits to proton translocation. Part of the complex F(0) domain and the peripheric stalk, which acts as a stator to hold the catalytic alpha(3)beta(3) subcomplex and subunit a/ATP6 static relative to the rotary elements. The protein is ATP synthase subunit O, mitochondrial of Arabidopsis thaliana (Mouse-ear cress).